The primary structure comprises 54 residues: UPF0391 membrane protein Bpet1858 (54 aa).

The next 2 helical transmembrane spans lie at Ala5 to Ala25 and Ala27 to Leu47.

Belongs to the UPF0391 family.

Its subcellular location is the cell membrane. The sequence is that of UPF0391 membrane protein Bpet1858 from Bordetella petrii (strain ATCC BAA-461 / DSM 12804 / CCUG 43448).